A 150-amino-acid polypeptide reads, in one-letter code: 3-hydroxyacyl-[acyl-carrier-protein] dehydratase FabZ (150 aa).

The active site involves His51.

It belongs to the thioester dehydratase family. FabZ subfamily.

The protein resides in the cytoplasm. It carries out the reaction a (3R)-hydroxyacyl-[ACP] = a (2E)-enoyl-[ACP] + H2O. Functionally, involved in unsaturated fatty acids biosynthesis. Catalyzes the dehydration of short chain beta-hydroxyacyl-ACPs and long chain saturated and unsaturated beta-hydroxyacyl-ACPs. The chain is 3-hydroxyacyl-[acyl-carrier-protein] dehydratase FabZ from Rubrobacter xylanophilus (strain DSM 9941 / JCM 11954 / NBRC 16129 / PRD-1).